The sequence spans 213 residues: Calcium-dependent cell adhesion molecule 1 (213 aa).

Repeat copies occupy residues 1 to 48, 49 to 97, 98 to 146, and 147 to 194. Positions 1 to 194 are 4 X approximate tandem repeats; it reads MSVDANKVKF…IKKDETFPKN (194 aa).

It belongs to the Dictyostelium CAD family. Post-translationally, the N-terminus is blocked.

The protein localises to the cell membrane. Functionally, mediates calcium-dependent cell-cell adhesion during the early stage of development. This is Calcium-dependent cell adhesion molecule 1 (cadA) from Dictyostelium discoideum (Social amoeba).